A 275-amino-acid chain; its full sequence is Large ribosomal subunit protein uL2 (275 aa).

The segment at 223–260 (VAMNPVDHPHGGGEGRTSGGRHPVSPWGLPTKGYKTRS) is disordered.

It belongs to the universal ribosomal protein uL2 family. Part of the 50S ribosomal subunit. Forms a bridge to the 30S subunit in the 70S ribosome.

Functionally, one of the primary rRNA binding proteins. Required for association of the 30S and 50S subunits to form the 70S ribosome, for tRNA binding and peptide bond formation. It has been suggested to have peptidyltransferase activity; this is somewhat controversial. Makes several contacts with the 16S rRNA in the 70S ribosome. The sequence is that of Large ribosomal subunit protein uL2 from Legionella pneumophila (strain Lens).